We begin with the raw amino-acid sequence, 1885 residues long: Fatty acid synthase subunit alpha (1885 aa).

Residues 92–107 (PDPADLAPKETPKQEE) show a composition bias toward basic and acidic residues. The tract at residues 92-140 (PDPADLAPKETPKQEESTPSAPAAATPTPAAAAAPTPAPAPASAGPVES) is disordered. Residues 108 to 126 (STPSAPAAATPTPAAAAAP) are compositionally biased toward low complexity. One can recognise a Carrier domain in the interval 146-221 (VKANLLIHVL…EQFQDSFSGQ (76 aa)). At serine 181 the chain carries O-(pantetheine 4'-phosphoryl)serine. Positions 1121 to 1661 (IQEIVVQHDL…QKGAQAVVVH (541 aa)) constitute a Ketosynthase family 3 (KS3) domain. Catalysis depends on for beta-ketoacyl synthase activity residues cysteine 1304, histidine 1546, and histidine 1587. Mg(2+) contacts are provided by aspartate 1771, valine 1772, and glutamate 1773. Acetyl-CoA-binding positions include 1771–1773 (DVE), tyrosine 1797, serine 1807, 1816–1826 (EAVFKALGVES), 1840–1843 (RDVN), and 1870–1872 (ISH). The Mg(2+) site is built by serine 1871 and histidine 1872.

This sequence belongs to the thiolase-like superfamily. Fungal fatty acid synthetase subunit alpha family. In terms of assembly, [Alpha(6)beta(6)] hexamers of two multifunctional subunits (alpha and beta).

It catalyses the reaction acetyl-CoA + n malonyl-CoA + 2n NADPH + 4n H(+) = a long-chain-acyl-CoA + n CoA + n CO2 + 2n NADP(+).. The catalysed reaction is a fatty acyl-[ACP] + malonyl-[ACP] + H(+) = a 3-oxoacyl-[ACP] + holo-[ACP] + CO2. It carries out the reaction a (3R)-hydroxyacyl-[ACP] + NADP(+) = a 3-oxoacyl-[ACP] + NADPH + H(+). Its function is as follows. Fatty acid synthetase catalyzes the formation of long-chain fatty acids from acetyl-CoA, malonyl-CoA and NADPH. The alpha subunit contains domains for: acyl carrier protein, 3-oxoacyl-[acyl-carrier-protein] reductase, and 3-oxoacyl-[acyl-carrier-protein] synthase. The polypeptide is Fatty acid synthase subunit alpha (FAS2) (Candida albicans (Yeast)).